We begin with the raw amino-acid sequence, 431 residues long: Histidinol dehydrogenase (431 aa).

NAD(+) is bound by residues Tyr127, Gln185, and Asn208. Substrate-binding residues include Ser234, Gln256, and His259. Residues Gln256 and His259 each coordinate Zn(2+). Catalysis depends on proton acceptor residues Glu323 and His324. His324, Asp357, Glu411, and His416 together coordinate substrate. Residue Asp357 participates in Zn(2+) binding. His416 lines the Zn(2+) pocket.

This sequence belongs to the histidinol dehydrogenase family. The cofactor is Zn(2+).

It catalyses the reaction L-histidinol + 2 NAD(+) + H2O = L-histidine + 2 NADH + 3 H(+). The protein operates within amino-acid biosynthesis; L-histidine biosynthesis; L-histidine from 5-phospho-alpha-D-ribose 1-diphosphate: step 9/9. In terms of biological role, catalyzes the sequential NAD-dependent oxidations of L-histidinol to L-histidinaldehyde and then to L-histidine. The sequence is that of Histidinol dehydrogenase from Vibrio vulnificus (strain CMCP6).